A 604-amino-acid chain; its full sequence is NADP-dependent malic enzyme, mitochondrial (604 aa).

Residues 29 to 50 (APAQGCHSKPGPARPVPLKKRG) are disordered. Tyr137 functions as the Proton donor in the catalytic mechanism. NAD(+) is bound at residue Arg190. Catalysis depends on Lys208, which acts as the Proton acceptor. 3 residues coordinate a divalent metal cation: Glu280, Asp281, and Asp304. Asp304 is a binding site for NAD(+). Ser371 carries the post-translational modification Phosphoserine. Asn443 is an NAD(+) binding site.

It belongs to the malic enzymes family. It depends on Mg(2+) as a cofactor. Mn(2+) is required as a cofactor. As to expression, expressed predominantly in organs with a low-division rate.

It is found in the mitochondrion matrix. It catalyses the reaction (S)-malate + NADP(+) = pyruvate + CO2 + NADPH. The enzyme catalyses oxaloacetate + H(+) = pyruvate + CO2. Its function is as follows. Catalyzes the oxidative decarboxylation of (S)-malate to pyruvate using NADP(+) as a cofactor. Can also reverse the decarboxylation reaction, but only with significantly lower efficiency. The protein is NADP-dependent malic enzyme, mitochondrial of Homo sapiens (Human).